The primary structure comprises 661 residues: uncharacterized protein (661 aa).

Positions 1-24 (MKTLKTLKIFIIVFIASVSLASFA) are cleaved as a signal peptide. A run of 6 helical transmembrane segments spans residues 226 to 246 (IIGA…ALNT), 254 to 274 (IALF…LGPL), 410 to 430 (IILA…LYFI), 436 to 456 (CMIT…MALF), 469 to 489 (VCIS…LLIT), and 562 to 582 (VVSI…FYYF). The interval 629–661 (GKPLVGDKPGVGGKRKEGEQQGGDLASGSGGGK) is disordered.

It belongs to the TrbL/VirB6 family.

It is found in the cell membrane. This is an uncharacterized protein from Rickettsia conorii (strain ATCC VR-613 / Malish 7).